The primary structure comprises 494 residues: Splicing regulatory glutamine/lysine-rich protein 1 (494 aa).

The RRM domain occupies 69–145; it reads RTVYVGNLNS…RPLKINHSNN (77 aa). Phosphoserine occurs at positions 174 and 187. The disordered stretch occupies residues 176–494; the sequence is ISAAIEPESG…ERLCSTADAV (319 aa). Basic and acidic residues predominate over residues 183–192; that stretch reads ESGKSNERKG. Composition is skewed to basic residues over residues 193 to 230 and 238 to 262; these read GRSR…RSRS and SKSP…RSRD. Positions 263–340 are enriched in basic and acidic residues; the sequence is KRKDTREKVK…DRSKEADEKR (78 aa). T348 carries the post-translational modification Phosphothreonine. Residues 357–373 are compositionally biased toward basic residues; sequence RRSRSASRERRRRRSRS. Basic and acidic residues-rich tracts occupy residues 404–453 and 463–474; these read REKE…KEAD and KDTARTEEESKA.

Belongs to the splicing factor SR family. Interacts with SREK1IP1. Homodimer. Binds SFRS1, SFRS2, SFRS3 and SFRS6. Interacts with the spliceosome. In terms of tissue distribution, ubiquitous. Detected in liver, brain, lung, spleen, testis and pancreas.

It is found in the nucleus. Its function is as follows. Participates in the regulation of alternative splicing by modulating the activity of other splice facors. Inhibits the splicing activity of SFRS1, SFRS2 and SFRS6. Augments the splicing activity of SFRS3. The polypeptide is Splicing regulatory glutamine/lysine-rich protein 1 (Srek1) (Rattus norvegicus (Rat)).